Here is a 106-residue protein sequence, read N- to C-terminus: uncharacterized protein (106 aa).

An N-terminal signal peptide occupies residues Met1–Thr22. The tract at residues Ile23–Asp46 is disordered.

This is an uncharacterized protein from Arabidopsis thaliana (Mouse-ear cress).